Here is a 248-residue protein sequence, read N- to C-terminus: 2,3-bisphosphoglycerate-dependent phosphoglycerate mutase (248 aa).

Residues 10–17 (RHGQSEWN), 23–24 (TG), R62, 89–92 (ERHY), K100, 116–117 (RR), and 183–184 (GN) each bind substrate. The active-site Tele-phosphohistidine intermediate is H11. E89 (proton donor/acceptor) is an active-site residue.

The protein belongs to the phosphoglycerate mutase family. BPG-dependent PGAM subfamily.

It catalyses the reaction (2R)-2-phosphoglycerate = (2R)-3-phosphoglycerate. It functions in the pathway carbohydrate degradation; glycolysis; pyruvate from D-glyceraldehyde 3-phosphate: step 3/5. Catalyzes the interconversion of 2-phosphoglycerate and 3-phosphoglycerate. The sequence is that of 2,3-bisphosphoglycerate-dependent phosphoglycerate mutase from Corynebacterium diphtheriae (strain ATCC 700971 / NCTC 13129 / Biotype gravis).